The following is a 224-amino-acid chain: Large ribosomal subunit protein uL1 (224 aa).

Belongs to the universal ribosomal protein uL1 family. Part of the 50S ribosomal subunit.

Its function is as follows. Binds directly to 23S rRNA. The L1 stalk is quite mobile in the ribosome, and is involved in E site tRNA release. Functionally, protein L1 is also a translational repressor protein, it controls the translation of the L11 operon by binding to its mRNA. This Borrelia recurrentis (strain A1) protein is Large ribosomal subunit protein uL1.